The sequence spans 450 residues: Tubulin alpha-6 chain (450 aa).

GTP contacts are provided by Gln11, Glu71, Gly144, Thr145, Thr179, Asn206, and Asn228. Position 71 (Glu71) interacts with Mg(2+). Residue Glu254 is part of the active site.

Belongs to the tubulin family. As to quaternary structure, dimer of alpha and beta chains. A typical microtubule is a hollow water-filled tube with an outer diameter of 25 nm and an inner diameter of 15 nM. Alpha-beta heterodimers associate head-to-tail to form protofilaments running lengthwise along the microtubule wall with the beta-tubulin subunit facing the microtubule plus end conferring a structural polarity. Microtubules usually have 13 protofilaments but different protofilament numbers can be found in some organisms and specialized cells. Mg(2+) serves as cofactor. Undergoes a tyrosination/detyrosination cycle, the cyclic removal and re-addition of a C-terminal tyrosine residue by the enzymes tubulin tyrosine carboxypeptidase (TTCP) and tubulin tyrosine ligase (TTL), respectively.

It is found in the cytoplasm. It localises to the cytoskeleton. The catalysed reaction is GTP + H2O = GDP + phosphate + H(+). Functionally, tubulin is the major constituent of microtubules, a cylinder consisting of laterally associated linear protofilaments composed of alpha- and beta-tubulin heterodimers. Microtubules grow by the addition of GTP-tubulin dimers to the microtubule end, where a stabilizing cap forms. Below the cap, tubulin dimers are in GDP-bound state, owing to GTPase activity of alpha-tubulin. This Zea mays (Maize) protein is Tubulin alpha-6 chain (TUBA6).